We begin with the raw amino-acid sequence, 421 residues long: ATP-dependent RNA helicase RhlB (421 aa).

The short motif at 9 to 37 (QKFSDFSLHPKVVEALEKKGFHNCTPIQA) is the Q motif element. The region spanning 40–219 (LPLTLAGRDV…FEQMNNAEYI (180 aa)) is the Helicase ATP-binding domain. 53 to 60 (AQTGTGKT) is an ATP binding site. The DEAD box motif lies at 165–168 (DEAD). The Helicase C-terminal domain maps to 245–390 (RLLQTLIEEE…VSKYNPDALM (146 aa)). Residues 392 to 421 (DLPKPLRLTRPRTGNGPRRTGAPRNRRRSG) form a disordered region. Residues 402-414 (PRTGNGPRRTGAP) are compositionally biased toward low complexity.

The protein belongs to the DEAD box helicase family. RhlB subfamily. In terms of assembly, component of the RNA degradosome, which is a multiprotein complex involved in RNA processing and mRNA degradation.

It is found in the cytoplasm. The enzyme catalyses ATP + H2O = ADP + phosphate + H(+). DEAD-box RNA helicase involved in RNA degradation. Has RNA-dependent ATPase activity and unwinds double-stranded RNA. The protein is ATP-dependent RNA helicase RhlB of Shigella dysenteriae serotype 1 (strain Sd197).